We begin with the raw amino-acid sequence, 755 residues long: MSGLLGKSSPAKRVDGNNDLPMYYVNPMSVEPQGRPSDTTRVSVTFAEHLMNVEDARNDESASSRALGIASPINSAASSFNSWASAPASSISSSPFVLSFTDLTYSVKIQKKFNPLACCRRSGNDSSVNTKILLNGISGEAREGEMMAVLGASGSGKSTLIDALANRIAKDSLRGSITLNGEVLESSMQKVISAYVMQDDLLFPMLTVEETLMFSAEFRLPRSLSKKKKKARVQALIDQLGLRSAAKTVIGDEGHRGVSGGERRRVSIGNDIIHDPIILFLDEPTSGLDSTSAYMVIKVLQRIAQSGSIVIMSIHQPSYRIMGLLDQLIFLSKGNTVYSGSPTHLPQFFSEFKHPIPENENKTEFALDLIRELEYSTEGTKPLVEFHKQWRAKQAPSYNNNNKRNTNVSSLKEAITASISRGKLVSGATNNNSSNLTPSFQTFANPFWIEMIVIGKRAILNSRRQPELLGMRLGAVMVTGIILATMFTNLDNSPKGAQERLGFFAFAMSTTFYTCAEAIPVFLQERYIFMRETAYNAYRRSSYVLSQSIISIPALIVLSASFAATTFWAVGLDGGANGFFFFYFTILASFWAGSSFVTFLSGVIPNVMLGFTVVVAILAYFLLFSGFFISRDRIPVYWLWFHYISLVKYPYEGVLQNEFQNPTRCFARGVQLFDNSPLGEFPNDVKVNLLKSMSGVLGTNVTAETCVTTGIDILKQQGITDISKWNCLWITVAWGFFFRVLFYFTLLIGSKNKRK.

Residues 98-358 (LSFTDLTYSV…FSEFKHPIPE (261 aa)) enclose the ABC transporter domain. 151–158 (GASGSGKS) serves as a coordination point for ATP. The 211-residue stretch at 449 to 659 (IEMIVIGKRA…PYEGVLQNEF (211 aa)) folds into the ABC transmembrane type-2 domain. 6 helical membrane-spanning segments follow: residues 468-488 (LLGMRLGAVMVTGIILATMFT), 503-523 (FFAFAMSTTFYTCAEAIPVFL), 552-572 (IPALIVLSASFAATTFWAVGL), 579-599 (FFFFYFTILASFWAGSSFVTF), 609-629 (LGFTVVVAILAYFLLFSGFFI), and 728-748 (LWITVAWGFFFRVLFYFTLLI).

This sequence belongs to the ABC transporter superfamily. ABCG family. Eye pigment precursor importer (TC 3.A.1.204) subfamily.

It is found in the membrane. The sequence is that of ABC transporter G family member 2 (ABCG2) from Arabidopsis thaliana (Mouse-ear cress).